The sequence spans 92 residues: Large ribosomal subunit protein eL31 (92 aa).

The protein belongs to the eukaryotic ribosomal protein eL31 family.

This chain is Large ribosomal subunit protein eL31, found in Desulfurococcus amylolyticus (strain DSM 18924 / JCM 16383 / VKM B-2413 / 1221n) (Desulfurococcus kamchatkensis).